The sequence spans 372 residues: Cytochrome b (372 aa).

4 helical membrane passes run 25 to 45 (FGSM…FLAI), 69 to 90 (WIMQ…YIHI), 105 to 125 (WLSG…GYVL), and 170 to 190 (FFAL…IHII). Heme b contacts are provided by histidine 75 and histidine 89. 2 residues coordinate heme b: histidine 174 and histidine 188. A ubiquinone is bound at residue histidine 193. Transmembrane regions (helical) follow at residues 218 to 238 (YKDM…LSFS), 280 to 300 (LGGA…PFTH), 312 to 332 (LSQI…WTAS), and 339 to 358 (FISI…ITIP).

This sequence belongs to the cytochrome b family. In terms of assembly, the cytochrome bc1 complex contains 3 respiratory subunits (MT-CYB, CYC1 and UQCRFS1), 2 core proteins (UQCRC1 and UQCRC2) and probably 6 low-molecular weight proteins. Heme b is required as a cofactor.

It is found in the mitochondrion inner membrane. Functionally, component of the ubiquinol-cytochrome c reductase complex (complex III or cytochrome b-c1 complex) that is part of the mitochondrial respiratory chain. The b-c1 complex mediates electron transfer from ubiquinol to cytochrome c. Contributes to the generation of a proton gradient across the mitochondrial membrane that is then used for ATP synthesis. The sequence is that of Cytochrome b (MT-CYB) from Naja annulata annulata (Banded water cobra).